The sequence spans 150 residues: Peptidoglycan-associated lipoprotein (150 aa).

A signal peptide spans 1–19; the sequence is MKKLTKVLLVAGSVAVLAA. Cys20 carries N-palmitoyl cysteine lipidation. Cys20 carries S-diacylglycerol cysteine lipidation. Residues 37-150 form the OmpA-like domain; it reads SVQDLQQRYN…SKNRRAVLAY (114 aa).

This sequence belongs to the Pal lipoprotein family. As to quaternary structure, the Tol-Pal system is composed of five core proteins: the inner membrane proteins TolA, TolQ and TolR, the periplasmic protein TolB and the outer membrane protein Pal. They form a network linking the inner and outer membranes and the peptidoglycan layer.

It localises to the cell outer membrane. Functionally, part of the Tol-Pal system, which plays a role in outer membrane invagination during cell division and is important for maintaining outer membrane integrity. In Pasteurella multocida (strain Pm70), this protein is Peptidoglycan-associated lipoprotein.